The primary structure comprises 122 residues: uncharacterized protein (122 aa).

Residues 46 to 116 (KDLQKEVDDL…HQLENKRELN (71 aa)) are a coiled coil.

This is an uncharacterized protein from Invertebrate iridescent virus 6 (IIV-6).